The primary structure comprises 87 residues: Lipid-anchored plasma membrane protein uvi15 (87 aa).

The disordered stretch occupies residues 1 to 64 (MSAQQFYGDK…MYVQQPQASD (64 aa)). A compositionally biased stretch (low complexity) spans 18-41 (QQAYGGPNYYPPQQNYPQQGYAPP).

It belongs to the CYSTM1 family. Post-translationally, palmitoylated.

The protein localises to the cell membrane. It localises to the cell tip. Its function is as follows. Required for the maintenance of viability of cells in stationary phase and in starvation conditions. The protein is Lipid-anchored plasma membrane protein uvi15 (uvi15) of Schizosaccharomyces pombe (strain 972 / ATCC 24843) (Fission yeast).